The following is an 84-amino-acid chain: Large ribosomal subunit protein bL31B (84 aa).

Belongs to the bacterial ribosomal protein bL31 family. Type B subfamily. Part of the 50S ribosomal subunit.

The protein is Large ribosomal subunit protein bL31B of Bacteroides thetaiotaomicron (strain ATCC 29148 / DSM 2079 / JCM 5827 / CCUG 10774 / NCTC 10582 / VPI-5482 / E50).